We begin with the raw amino-acid sequence, 147 residues long: D-aminoacyl-tRNA deacylase (147 aa).

A Gly-cisPro motif, important for rejection of L-amino acids motif is present at residues 136–137 (GP).

It belongs to the DTD family. As to quaternary structure, homodimer.

The protein localises to the cytoplasm. The enzyme catalyses glycyl-tRNA(Ala) + H2O = tRNA(Ala) + glycine + H(+). It carries out the reaction a D-aminoacyl-tRNA + H2O = a tRNA + a D-alpha-amino acid + H(+). In terms of biological role, an aminoacyl-tRNA editing enzyme that deacylates mischarged D-aminoacyl-tRNAs. Also deacylates mischarged glycyl-tRNA(Ala), protecting cells against glycine mischarging by AlaRS. Acts via tRNA-based rather than protein-based catalysis; rejects L-amino acids rather than detecting D-amino acids in the active site. By recycling D-aminoacyl-tRNA to D-amino acids and free tRNA molecules, this enzyme counteracts the toxicity associated with the formation of D-aminoacyl-tRNA entities in vivo and helps enforce protein L-homochirality. The protein is D-aminoacyl-tRNA deacylase of Streptococcus pneumoniae serotype 2 (strain D39 / NCTC 7466).